A 1938-amino-acid chain; its full sequence is Myosin heavy chain, striated muscle (1938 aa).

One can recognise a Myosin N-terminal SH3-like domain in the interval 29 to 79 (DGKKNCWVPDEKEGFASAEIQSSKGDEITVKIVADSSTRTVKKDDIQSMNP). One can recognise a Myosin motor domain in the interval 83–775 (EKLEDMANMT…VLGNLEEMRD (693 aa)). 176–183 (GESGAGKT) lines the ATP pocket. Positions 653 to 675 (LNKLMKNLYSTHPHFVRCIIPNE) are actin-binding. In terms of domain architecture, IQ spans 778–805 (LSKIISMFQAHIRGYLIRKAYKKLQDQR). The interval 836-1938 (LLSIARQEEE…RSSVSVSASN (1103 aa)) is rodlike tail (S2 and LMM domains). The stretch at 836–1938 (LLSIARQEEE…RSSVSVSASN (1103 aa)) forms a coiled coil. 2 stretches are compositionally biased toward basic and acidic residues: residues 1041–1058 (VRGDVEKAKRKVEQDLKS) and 1212–1225 (SKLEKDKKDLKREM). Disordered stretches follow at residues 1041–1062 (VRGDVEKAKRKVEQDLKSTQEN), 1187–1332 (SALR…EVRN), 1344–1363 (LEEEQESKSDVQRQLSKANN), and 1898–1938 (HELE…SASN). Residues 1265–1285 (RSINELQSQKSRLQAENSDLT) are compositionally biased toward polar residues. 3 stretches are compositionally biased toward basic and acidic residues: residues 1286–1303 (RQLEDAEHRVSVLSKEKS), 1310–1332 (EDARRSLEEETRARSKLQNEVRN), and 1344–1354 (LEEEQESKSDV). Positions 1922–1938 (RSSVSVQRSSVSVSASN) are enriched in low complexity.

This sequence belongs to the TRAFAC class myosin-kinesin ATPase superfamily. Myosin family. Muscle myosin is a hexameric protein that consists of 2 heavy chain subunits (MHC), 2 alkali light chain subunits (MLC) and 2 regulatory light chain subunits (MLC-2).

Its subcellular location is the cytoplasm. The protein resides in the myofibril. In terms of biological role, muscle contraction. Its function is as follows. Myosin is a protein that binds to F-actin and has ATPase activity that is activated by F-actin. This chain is Myosin heavy chain, striated muscle, found in Argopecten irradians (Bay scallop).